Consider the following 370-residue polypeptide: Queuine tRNA-ribosyltransferase (370 aa).

The Proton acceptor role is filled by Asp-92. Substrate contacts are provided by residues 92-96 (DSGGF), Asp-146, Gln-190, and Gly-217. Positions 248–254 (GVGTPEN) are RNA binding. Asp-267 (nucleophile) is an active-site residue. Residues Cys-305, Cys-307, Cys-310, and His-336 each contribute to the Zn(2+) site.

It belongs to the queuine tRNA-ribosyltransferase family. As to quaternary structure, homodimer. Within each dimer, one monomer is responsible for RNA recognition and catalysis, while the other monomer binds to the replacement base PreQ1. It depends on Zn(2+) as a cofactor.

It catalyses the reaction 7-aminomethyl-7-carbaguanine + guanosine(34) in tRNA = 7-aminomethyl-7-carbaguanosine(34) in tRNA + guanine. It functions in the pathway tRNA modification; tRNA-queuosine biosynthesis. Functionally, catalyzes the base-exchange of a guanine (G) residue with the queuine precursor 7-aminomethyl-7-deazaguanine (PreQ1) at position 34 (anticodon wobble position) in tRNAs with GU(N) anticodons (tRNA-Asp, -Asn, -His and -Tyr). Catalysis occurs through a double-displacement mechanism. The nucleophile active site attacks the C1' of nucleotide 34 to detach the guanine base from the RNA, forming a covalent enzyme-RNA intermediate. The proton acceptor active site deprotonates the incoming PreQ1, allowing a nucleophilic attack on the C1' of the ribose to form the product. After dissociation, two additional enzymatic reactions on the tRNA convert PreQ1 to queuine (Q), resulting in the hypermodified nucleoside queuosine (7-(((4,5-cis-dihydroxy-2-cyclopenten-1-yl)amino)methyl)-7-deazaguanosine). The protein is Queuine tRNA-ribosyltransferase of Desulforapulum autotrophicum (strain ATCC 43914 / DSM 3382 / VKM B-1955 / HRM2) (Desulfobacterium autotrophicum).